Here is a 65-residue protein sequence, read N- to C-terminus: Large ribosomal subunit protein bL35 (65 aa).

It belongs to the bacterial ribosomal protein bL35 family.

This is Large ribosomal subunit protein bL35 from Syntrophobacter fumaroxidans (strain DSM 10017 / MPOB).